A 151-amino-acid polypeptide reads, in one-letter code: D-aminoacyl-tRNA deacylase (151 aa).

The short motif at 136 to 137 is the Gly-cisPro motif, important for rejection of L-amino acids element; the sequence is GP.

Belongs to the DTD family. As to quaternary structure, homodimer.

It is found in the cytoplasm. The enzyme catalyses glycyl-tRNA(Ala) + H2O = tRNA(Ala) + glycine + H(+). The catalysed reaction is a D-aminoacyl-tRNA + H2O = a tRNA + a D-alpha-amino acid + H(+). In terms of biological role, an aminoacyl-tRNA editing enzyme that deacylates mischarged D-aminoacyl-tRNAs. Also deacylates mischarged glycyl-tRNA(Ala), protecting cells against glycine mischarging by AlaRS. Acts via tRNA-based rather than protein-based catalysis; rejects L-amino acids rather than detecting D-amino acids in the active site. By recycling D-aminoacyl-tRNA to D-amino acids and free tRNA molecules, this enzyme counteracts the toxicity associated with the formation of D-aminoacyl-tRNA entities in vivo and helps enforce protein L-homochirality. The chain is D-aminoacyl-tRNA deacylase from Lactococcus lactis subsp. cremoris (strain SK11).